The primary structure comprises 299 residues: Rhodanese-like/PpiC domain-containing protein 12, chloroplastic (299 aa).

The transit peptide at 1-81 (MFRVTGTLSA…SGFPALKMRA (81 aa)) directs the protein to the chloroplast. At Ser-82 the chain carries N-acetylserine. Residues 93–183 (SREILVQHLL…FGLHLLQVLS (91 aa)) enclose the PpiC domain. In terms of domain architecture, Rhodanese spans 205 to 297 (FMDEAQLIDV…YSLKVDPSIP (93 aa)). Catalysis depends on Cys-257, which acts as the Cysteine persulfide intermediate.

It is found in the plastid. The protein resides in the chloroplast. The protein is Rhodanese-like/PpiC domain-containing protein 12, chloroplastic of Arabidopsis thaliana (Mouse-ear cress).